The chain runs to 100 residues: Urease subunit gamma (100 aa).

Belongs to the urease gamma subunit family. In terms of assembly, heterotrimer of UreA (gamma), UreB (beta) and UreC (alpha) subunits. Three heterotrimers associate to form the active enzyme.

It is found in the cytoplasm. It carries out the reaction urea + 2 H2O + H(+) = hydrogencarbonate + 2 NH4(+). It participates in nitrogen metabolism; urea degradation; CO(2) and NH(3) from urea (urease route): step 1/1. The chain is Urease subunit gamma from Nostoc sp. (strain PCC 7120 / SAG 25.82 / UTEX 2576).